We begin with the raw amino-acid sequence, 627 residues long: (-)-alpha-pinene synthase 2, chloroplastic (627 aa).

A chloroplast-targeting transit peptide spans 1–36 (MALVSVAPMASRSCLHKSLSSSAHELKTICRTIPTL). The Mg(2+) site is built by D378, D382, and D530. Positions 378–382 (DDMYD) match the DDXXD motif motif.

It belongs to the terpene synthase family. Tpsd subfamily. The cofactor is Mg(2+). Mn(2+) is required as a cofactor.

It is found in the plastid. The protein localises to the chloroplast. The enzyme catalyses (2E)-geranyl diphosphate = (1S,5S)-alpha-pinene + diphosphate. It carries out the reaction (2E)-geranyl diphosphate = (1S,5S)-beta-pinene + diphosphate. It participates in terpene metabolism; oleoresin biosynthesis. Functionally, involved in defensive oleoresin formation in conifers in response to insect attack or other injury. Involved in monoterpene (C10) olefins biosynthesis. A mixture of alpha- and beta-pinene (35:10) is produced by this enzyme. This chain is (-)-alpha-pinene synthase 2, chloroplastic, found in Picea sitchensis (Sitka spruce).